The chain runs to 546 residues: Chaperonin GroEL (546 aa).

ATP contacts are provided by residues 30–33 (TLGP), Lys51, 87–91 (DGTTT), Gly415, 479–481 (NAA), and Asp495. The interval 526 to 546 (KEEKPDLSGAGAGMGGMGGMM) is disordered. Gly residues predominate over residues 535-546 (AGAGMGGMGGMM).

Belongs to the chaperonin (HSP60) family. In terms of assembly, forms a cylinder of 14 subunits composed of two heptameric rings stacked back-to-back. Interacts with the co-chaperonin GroES.

The protein resides in the cytoplasm. The catalysed reaction is ATP + H2O + a folded polypeptide = ADP + phosphate + an unfolded polypeptide.. Together with its co-chaperonin GroES, plays an essential role in assisting protein folding. The GroEL-GroES system forms a nano-cage that allows encapsulation of the non-native substrate proteins and provides a physical environment optimized to promote and accelerate protein folding. The chain is Chaperonin GroEL from Wigglesworthia glossinidia brevipalpis.